Reading from the N-terminus, the 284-residue chain is Aminoglycoside 6-adenylyltransferase (284 aa).

As to quaternary structure, homodimer.

The protein resides in the cytoplasm. It carries out the reaction streptomycin + ATP = 6-O-adenylylstreptomycin + diphosphate. The enzyme catalyses streptomycin + GTP = 6-O-guanylylstreptomycin + diphosphate. The catalysed reaction is streptidine + ATP = 6-O-adenylylstreptidine + diphosphate. In terms of biological role, mediates bacterial resistance to streptomycin. Adenylates streptomycin on the O-6 residue. Adenylates streptidine on the O-6 residue. Does not act on spectinomycin, neomycin-B or kanamycin. Specific for ATP and GTP nucleotides incorporating a purine ring. No reaction with CTP or UTP. The sequence is that of Aminoglycoside 6-adenylyltransferase from Bacillus subtilis (strain 168).